Consider the following 540-residue polypeptide: 2-isopropylmalate synthase (540 aa).

The Pyruvate carboxyltransferase domain occupies 8–271; that stretch reads VLIFDTTLRD…NPFFGRESDS (264 aa). Residues Asp17, His208, His210, and Asn244 each coordinate Mn(2+). The tract at residues 408-540 is regulatory domain; sequence QLRLVQVSCG…AVLADRRPGI (133 aa).

This sequence belongs to the alpha-IPM synthase/homocitrate synthase family. LeuA type 1 subfamily. In terms of assembly, homodimer. It depends on Mn(2+) as a cofactor.

Its subcellular location is the cytoplasm. It catalyses the reaction 3-methyl-2-oxobutanoate + acetyl-CoA + H2O = (2S)-2-isopropylmalate + CoA + H(+). It participates in amino-acid biosynthesis; L-leucine biosynthesis; L-leucine from 3-methyl-2-oxobutanoate: step 1/4. Functionally, catalyzes the condensation of the acetyl group of acetyl-CoA with 3-methyl-2-oxobutanoate (2-ketoisovalerate) to form 3-carboxy-3-hydroxy-4-methylpentanoate (2-isopropylmalate). The protein is 2-isopropylmalate synthase of Prochlorococcus marinus (strain MIT 9303).